Reading from the N-terminus, the 1049-residue chain is Retinoblastoma-like protein 1 (1049 aa).

T332, T369, and T385 each carry phosphothreonine. The domain A stretch occupies residues 385–584; it reads TPVASATQSV…WEALRASANK (200 aa). The interval 385–944 is pocket; binds T and E1A; it reads TPVASATQSV…GRVKSFALKY (560 aa). Residues 585–779 form a spacer region; that stretch reads VPSCEEVIFP…TQDAPLTGIS (195 aa). S640, S650, S748, and S761 each carry phosphoserine. The segment at 780 to 944 is domain B; the sequence is KPKRTGSLAL…GRVKSFALKY (165 aa). Phosphoserine is present on residues S959, S970, and S983. A Phosphothreonine modification is found at T992. S1004 and S1022 each carry phosphoserine.

It belongs to the retinoblastoma protein (RB) family. Component of the DREAM complex (also named LINC complex) at least composed of E2F4, E2F5, LIN9, LIN37, LIN52, LIN54, MYBL1, MYBL2, RBL1, RBL2, RBBP4, TFDP1 and TFDP2. The complex exists in quiescent cells where it represses cell cycle-dependent genes. It dissociates in S phase when LIN9, LIN37, LIN52 and LIN54 form a subcomplex that binds to MYBL2. Interacts with AATF. Interacts with KDM5A. Interacts with KMT5B and KMT5C. Interacts with USP4. Interacts with RBBP9. Post-translationally, cell-cycle arrest properties are inactivated by phosphorylation on Thr-332, Ser-640, Ser-959 and Ser-970 by CDK4.

It is found in the nucleus. Key regulator of entry into cell division. Directly involved in heterochromatin formation by maintaining overall chromatin structure and, in particular, that of constitutive heterochromatin by stabilizing histone methylation. Recruits and targets histone methyltransferases KMT5B and KMT5C, leading to epigenetic transcriptional repression. Controls histone H4 'Lys-20' trimethylation. Probably acts as a transcription repressor by recruiting chromatin-modifying enzymes to promoters. Potent inhibitor of E2F-mediated trans-activation. May act as a tumor suppressor. This chain is Retinoblastoma-like protein 1, found in Rattus norvegicus (Rat).